The sequence spans 315 residues: Oxalate oxidoreductase subunit delta (315 aa).

4Fe-4S ferredoxin-type domains are found at residues 252–280 (QRPIIDREACTECYTCWIYCPDSCITRTE) and 281–310 (EGPVFNMKYCKGCGLCTAVCPSGALTNVPE). Cys-261, Cys-264, Cys-267, Cys-271, Cys-290, Cys-293, Cys-296, and Cys-300 together coordinate [4Fe-4S] cluster.

Dimer of heterotrimer of one alpha, one beta and one delta subunit. [4Fe-4S] cluster serves as cofactor.

The enzyme catalyses oxidized 2[4Fe-4S]-[ferredoxin] + oxalate = reduced 2[4Fe-4S]-[ferredoxin] + 2 CO2. In terms of biological role, catalyzes the anaerobic oxidation of oxalate using a broad range of electron acceptors, including ferredoxin and the nickel-dependent carbon monoxide dehydrogenase. Does not require coenzyme A as cosubstrate. Enables anaerobic growth on oxalate which is used as energy source by the bacteria. This Moorella thermoacetica (strain ATCC 39073 / JCM 9320) protein is Oxalate oxidoreductase subunit delta.